A 437-amino-acid polypeptide reads, in one-letter code: MDNEVEKNIEIWKVKKLVQSLEKARGNGTSMISLVIPPKGQIPLYQKMLTDEYGTASNIKSRVNRLSVLSAITSTQQKLKLYNTLPKNGLVLYCGDIITEDGKEKKVTFDIEPYKPINTSLYLCDNKFHTEVLSELLQADDKFGFIVMDGQGTLFGSVSGNTRTVLHKFTVDLPKKHGRGGQSALRFARLREEKRHNYVRKVAEVAVQNFITNDKVNVKGLILAGSADFKTDLAKSELFDPRLACKVISIVDVSYGGENGFNQAIELSAEALANVKYVQEKKLLEAYFDEISQDTGKFCYGIDDTLKALDLGAVEKLIVFENLETIRYTFKDAEDNEVIKFAEPEAKDKSFAIDKATGQEMDVVSEEPLIEWLAANYKNFGATLEFITDKSSEGAQFVTGFGGIGAMLRYKVNFEQLVDESEDEYYDEDEGSDYDFI.

Gln182 carries the N5-methylglutamine modification. A Glycyl lysine isopeptide (Lys-Gly) (interchain with G-Cter in ubiquitin) cross-link involves residue Lys331. Ser421 carries the post-translational modification Phosphoserine.

It belongs to the eukaryotic release factor 1 family. Component of the eRF1-eRF3-GTP ternary complex, composed of SUP45/eRF1, SUP35/eRF3 and GTP. Interacts with TPA1. Post-translationally, N5-methylated on Gln-182 by MTQ2.

The protein resides in the cytoplasm. Its function is as follows. Component of the eRF1-eRF3-GTP ternary complex, a ternary complex that mediates translation termination in response to the termination codons. The eRF1-eRF3-GTP complex binds to a stop codon in the ribosomal A-site. SUP45/eRF1 is responsible for stop codon recognition and inducing hydrolysis of peptidyl-tRNA. Following GTP hydrolysis by SUP35/eRF3, SUP35/eRF3 dissociates, permitting SUP45/eRF1 to accommodate fully in the A-site and mediate hydrolysis of peptidyl-tRNA. This is Eukaryotic peptide chain release factor subunit 1 (SUP45) from Saccharomyces cerevisiae (strain ATCC 204508 / S288c) (Baker's yeast).